Consider the following 459-residue polypeptide: UDP-N-acetylmuramoylalanine--D-glutamate ligase (459 aa).

120-126 lines the ATP pocket; sequence GSNGKTT.

The protein belongs to the MurCDEF family.

The protein localises to the cytoplasm. The catalysed reaction is UDP-N-acetyl-alpha-D-muramoyl-L-alanine + D-glutamate + ATP = UDP-N-acetyl-alpha-D-muramoyl-L-alanyl-D-glutamate + ADP + phosphate + H(+). It participates in cell wall biogenesis; peptidoglycan biosynthesis. Functionally, cell wall formation. Catalyzes the addition of glutamate to the nucleotide precursor UDP-N-acetylmuramoyl-L-alanine (UMA). In Lactobacillus acidophilus (strain ATCC 700396 / NCK56 / N2 / NCFM), this protein is UDP-N-acetylmuramoylalanine--D-glutamate ligase.